Here is a 151-residue protein sequence, read N- to C-terminus: Phospholipase A2 inhibitor BjussuMIP (151 aa).

A signal peptide spans 1–4 (LANG). A C-type lectin domain is found at 31–146 (LKYAFLTVHK…CDENLLVVCE (116 aa)). Cystine bridges form between Cys68–Cys145 and Cys123–Cys137. N-linked (GlcNAc...) asparagine glycosylation is present at Asn107.

It belongs to the alpha-type phospholipase A2 inhibitor family. As to quaternary structure, oligomer. Expressed by the liver.

The protein resides in the secreted. Inhibits enzymatic, anticoagulant, edema formation, myotoxicity activities induced by snakes phospholipase A2. Is oligomeric, but it is probable that each of its subunits can bind and inactive a PLA2 molecule. This is Phospholipase A2 inhibitor BjussuMIP from Bothrops jararacussu (Jararacussu).